Consider the following 130-residue polypeptide: Small ribosomal subunit protein uS9 (130 aa).

The protein belongs to the universal ribosomal protein uS9 family.

The protein is Small ribosomal subunit protein uS9 of Ralstonia nicotianae (strain ATCC BAA-1114 / GMI1000) (Ralstonia solanacearum).